The primary structure comprises 226 residues: Glycerol-3-phosphate acyltransferase (226 aa).

A run of 6 helical transmembrane segments spans residues 1-21 (MGLW…LGSF), 56-76 (GPGA…IALV), 102-122 (LVTL…FLGF), 134-154 (ILLA…AVVV), 159-178 (IVSL…MVVL), and 182-197 (LPYI…YVIL).

This sequence belongs to the PlsY family. As to quaternary structure, probably interacts with PlsX.

It localises to the cell inner membrane. The enzyme catalyses an acyl phosphate + sn-glycerol 3-phosphate = a 1-acyl-sn-glycero-3-phosphate + phosphate. It participates in lipid metabolism; phospholipid metabolism. In terms of biological role, catalyzes the transfer of an acyl group from acyl-phosphate (acyl-PO(4)) to glycerol-3-phosphate (G3P) to form lysophosphatidic acid (LPA). This enzyme utilizes acyl-phosphate as fatty acyl donor, but not acyl-CoA or acyl-ACP. This chain is Glycerol-3-phosphate acyltransferase, found in Trichormus variabilis (strain ATCC 29413 / PCC 7937) (Anabaena variabilis).